A 215-amino-acid polypeptide reads, in one-letter code: Uracil phosphoribosyltransferase (215 aa).

5-phospho-alpha-D-ribose 1-diphosphate-binding positions include Arg-84, Arg-109, and 136–144 (DPMLATGNT). Uracil contacts are provided by residues Ile-198 and 203–205 (GDA). Asp-204 contacts 5-phospho-alpha-D-ribose 1-diphosphate.

This sequence belongs to the UPRTase family. Mg(2+) is required as a cofactor.

The catalysed reaction is UMP + diphosphate = 5-phospho-alpha-D-ribose 1-diphosphate + uracil. Its pathway is pyrimidine metabolism; UMP biosynthesis via salvage pathway; UMP from uracil: step 1/1. With respect to regulation, allosterically activated by GTP. Functionally, catalyzes the conversion of uracil and 5-phospho-alpha-D-ribose 1-diphosphate (PRPP) to UMP and diphosphate. This chain is Uracil phosphoribosyltransferase, found in Methanothermobacter thermautotrophicus (strain ATCC 29096 / DSM 1053 / JCM 10044 / NBRC 100330 / Delta H) (Methanobacterium thermoautotrophicum).